The chain runs to 328 residues: Ketol-acid reductoisomerase (NADP(+)) (328 aa).

A KARI N-terminal Rossmann domain is found at 2–182 (AKIYTDREAS…GATRAGVIET (181 aa)). NADP(+) contacts are provided by residues 25–28 (YGIQ), Arg48, Ser53, and 83–86 (DMEQ). Residue His108 is part of the active site. Gly134 serves as a coordination point for NADP(+). The KARI C-terminal knotted domain maps to 183–328 (TFAEETETDL…EEMRKLLFGP (146 aa)). Asp191, Glu195, Glu227, and Glu231 together coordinate Mg(2+). Ser252 lines the substrate pocket.

The protein belongs to the ketol-acid reductoisomerase family. Mg(2+) is required as a cofactor.

The enzyme catalyses (2R)-2,3-dihydroxy-3-methylbutanoate + NADP(+) = (2S)-2-acetolactate + NADPH + H(+). The catalysed reaction is (2R,3R)-2,3-dihydroxy-3-methylpentanoate + NADP(+) = (S)-2-ethyl-2-hydroxy-3-oxobutanoate + NADPH + H(+). Its pathway is amino-acid biosynthesis; L-isoleucine biosynthesis; L-isoleucine from 2-oxobutanoate: step 2/4. The protein operates within amino-acid biosynthesis; L-valine biosynthesis; L-valine from pyruvate: step 2/4. Involved in the biosynthesis of branched-chain amino acids (BCAA). Catalyzes an alkyl-migration followed by a ketol-acid reduction of (S)-2-acetolactate (S2AL) to yield (R)-2,3-dihydroxy-isovalerate. In the isomerase reaction, S2AL is rearranged via a Mg-dependent methyl migration to produce 3-hydroxy-3-methyl-2-ketobutyrate (HMKB). In the reductase reaction, this 2-ketoacid undergoes a metal-dependent reduction by NADPH to yield (R)-2,3-dihydroxy-isovalerate. This Pyrobaculum aerophilum (strain ATCC 51768 / DSM 7523 / JCM 9630 / CIP 104966 / NBRC 100827 / IM2) protein is Ketol-acid reductoisomerase (NADP(+)).